The sequence spans 221 residues: Alpha-ketoglutarate-dependent dioxygenase alkB homolog 7, mitochondrial (221 aa).

The N-terminal 23 residues, 1–23, are a transit peptide targeting the mitochondrion; sequence MAGSRRLAMRLLSGCAWVRGSDS. Histidine 121 and aspartate 123 together coordinate Fe cation. 2-oxoglutarate is bound at residue tyrosine 165. Histidine 177 serves as a coordination point for Fe cation. 2-oxoglutarate-binding positions include 197 to 199 and arginine 203; that span reads RIS.

Belongs to the alkB family. It depends on Fe(2+) as a cofactor. Widely expressed.

It is found in the mitochondrion matrix. Functionally, may function as protein hydroxylase; can catalyze auto-hydroxylation at Leu-110 (in vitro), but this activity may be due to the absence of the true substrate. Required to induce programmed necrosis in response to DNA damage caused by cytotoxic alkylating agents. Acts by triggering the collapse of mitochondrial membrane potential and loss of mitochondrial function that leads to energy depletion and cell death. ALKBH7-mediated necrosis is probably required to prevent the accumulation of cells with DNA damage. Does not display DNA demethylase activity. Involved in fatty acid metabolism. The polypeptide is Alpha-ketoglutarate-dependent dioxygenase alkB homolog 7, mitochondrial (Alkbh7) (Mus musculus (Mouse)).